A 424-amino-acid polypeptide reads, in one-letter code: Kynurenine--oxoglutarate transaminase 1 (424 aa).

Gly-36 contacts substrate. Lys-82 carries the N6-succinyllysine modification. Asn-185 is a binding site for substrate. An N6-(pyridoxal phosphate)lysine modification is found at Lys-247. Substrate is bound at residue Arg-398. Residue Lys-413 is modified to N6-succinyllysine.

The protein belongs to the class-I pyridoxal-phosphate-dependent aminotransferase family. In terms of assembly, homodimer. Pyridoxal 5'-phosphate serves as cofactor.

It localises to the cytoplasm. It is found in the cytosol. The enzyme catalyses L-kynurenine + 2-oxoglutarate = kynurenate + L-glutamate + H2O. It carries out the reaction 3-phenylpyruvate + L-glutamine = 2-oxoglutaramate + L-phenylalanine. The catalysed reaction is an S-substituted L-cysteine + H2O = a thiol + pyruvate + NH4(+). It participates in amino-acid degradation; L-kynurenine degradation; kynurenate from L-kynurenine: step 1/2. Its function is as follows. Catalyzes the irreversible transamination of the L-tryptophan metabolite L-kynurenine to form kynurenic acid (KA), an intermediate in the tryptophan catabolic pathway which is also a broad spectrum antagonist of the three ionotropic excitatory amino acid receptors among others. Metabolizes the cysteine conjugates of certain halogenated alkenes and alkanes to form reactive metabolites. Catalyzes the beta-elimination of S-conjugates and Se-conjugates of L-(seleno)cysteine, resulting in the cleavage of the C-S or C-Se bond. This is Kynurenine--oxoglutarate transaminase 1 (Kyat1) from Mus musculus (Mouse).